The chain runs to 35 residues: Beta/delta-theraphotoxin-Pre1a (35 aa).

3 disulfides stabilise this stretch: Cys3/Cys18, Cys10/Cys23, and Cys17/Cys30.

The protein belongs to the neurotoxin 10 (Hwtx-1) family. As to expression, expressed by the venom gland.

Its subcellular location is the secreted. Gating-modifier toxin that both inhibits the peak current of human Nav1.1/SCN1A, rat Nav1.2/SCN2A, human Nav1.6/SCN8A, and human Nav1.7/SCN9A and concurrently inhibits fast inactivation of human Nav1.1 and rat Nav1.3/SCN3A. The relative rank order potency for Nav modulation is Nav1.3 (inactivation EC(50)=45 nM) &gt; Nav1.7 &gt; Nav1.2 &gt; Nav1.1 (inactivation) &gt; Nav1.1 &gt; Nav1.6 &gt; Nav1.3 (IC(50)=8 uM). The DII and DIV S3-S4 loops of Nav channel voltage sensors are important for the interaction of this toxin with Nav channels but cannot account for its unique subtype selectivity. It is the variability of the S1-S2 loops between NaV channels which contributes substantially to the selectivity profile observed for this toxin, particularly with regards to fast inactivation. This toxin may bind the channel in the resting state. In Psalmopoeus reduncus (Costa Rican orangemouth tarantula), this protein is Beta/delta-theraphotoxin-Pre1a.